The chain runs to 155 residues: Transcriptional repressor NrdR (155 aa).

Residues 3–34 (CPFCGNIDTQVKDSRPAEDHVSIRRRRFCPAC) fold into a zinc finger. An ATP-cone domain is found at 49-139 (LVVIKSTGKR…VYKNFQAADD (91 aa)).

Belongs to the NrdR family. The cofactor is Zn(2+).

In terms of biological role, negatively regulates transcription of bacterial ribonucleotide reductase nrd genes and operons by binding to NrdR-boxes. In Roseobacter denitrificans (strain ATCC 33942 / OCh 114) (Erythrobacter sp. (strain OCh 114)), this protein is Transcriptional repressor NrdR.